Reading from the N-terminus, the 621-residue chain is Glutathione-regulated potassium-efflux system protein KefC (621 aa).

Transmembrane regions (helical) follow at residues 9-29 (ALIY…LGLG), 30-50 (SVLG…RLVN), 54-74 (AILH…GLEL), 90-110 (GALQ…LLGL), 114-134 (VAEL…MQAM), 149-169 (FAVL…IPLL), 178-198 (LMAF…VVVL), 232-252 (LLLE…GVLL), 270-290 (GLLL…APWS), 296-316 (IVIL…LIAQ), 326-346 (RWFA…FGPA), and 359-379 (ALTL…VLLT). The region spanning 399–518 (QPRVIVAGFG…AGVEAPERET (120 aa)) is the RCK N-terminal domain. Residues 598-621 (GWQGTEEGRHTGDIADEPENKPSA) form a disordered region.

This sequence belongs to the monovalent cation:proton antiporter 2 (CPA2) transporter (TC 2.A.37) family. KefC subfamily. Homodimer. Interacts with the regulatory subunit KefF.

The protein resides in the cell inner membrane. Its function is as follows. Pore-forming subunit of a potassium efflux system that confers protection against electrophiles. Catalyzes K(+)/H(+) antiport. The protein is Glutathione-regulated potassium-efflux system protein KefC of Klebsiella aerogenes (Enterobacter aerogenes).